The sequence spans 283 residues: Protein/nucleic acid deglycase HchA (283 aa).

3 residues coordinate Zn(2+): histidine 86, glutamate 91, and histidine 123. Cysteine 185 serves as the catalytic Nucleophile.

The protein belongs to the peptidase C56 family. HchA subfamily. As to quaternary structure, homodimer.

Its subcellular location is the cytoplasm. It catalyses the reaction N(omega)-(1-hydroxy-2-oxopropyl)-L-arginyl-[protein] + H2O = lactate + L-arginyl-[protein] + H(+). The catalysed reaction is N(6)-(1-hydroxy-2-oxopropyl)-L-lysyl-[protein] + H2O = lactate + L-lysyl-[protein] + H(+). It carries out the reaction S-(1-hydroxy-2-oxopropyl)-L-cysteinyl-[protein] + H2O = lactate + L-cysteinyl-[protein] + H(+). The enzyme catalyses N(omega)-(1-hydroxy-2-oxoethyl)-L-arginyl-[protein] + H2O = L-arginyl-[protein] + glycolate + H(+). It catalyses the reaction N(6)-(1-hydroxy-2-oxoethyl)-L-lysyl-[protein] + H2O = glycolate + L-lysyl-[protein] + H(+). The catalysed reaction is S-(1-hydroxy-2-oxoethyl)-L-cysteinyl-[protein] + H2O = glycolate + L-cysteinyl-[protein] + H(+). It carries out the reaction N(2)-(1-hydroxy-2-oxopropyl)-dGTP + H2O = lactate + dGTP + H(+). The enzyme catalyses N(2)-(1-hydroxy-2-oxopropyl)-GTP + H2O = lactate + GTP + H(+). It catalyses the reaction N(2)-(1-hydroxy-2-oxopropyl)-GDP + H2O = lactate + GDP + H(+). The catalysed reaction is N(2)-(1-hydroxy-2-oxopropyl)-GMP + H2O = lactate + GMP + H(+). It carries out the reaction N(2)-(1-hydroxy-2-oxoethyl)-dGTP + H2O = dGTP + glycolate + H(+). The enzyme catalyses N(2)-(1-hydroxy-2-oxoethyl)-GTP + H2O = glycolate + GTP + H(+). It catalyses the reaction N(2)-(1-hydroxy-2-oxoethyl)-GDP + H2O = glycolate + GDP + H(+). The catalysed reaction is N(2)-(1-hydroxy-2-oxoethyl)-GMP + H2O = glycolate + GMP + H(+). It carries out the reaction an N(2)-(1-hydroxy-2-oxopropyl)-guanosine in RNA + H2O = a guanosine in RNA + lactate + H(+). The enzyme catalyses an N(2)-(1-hydroxy-2-oxopropyl)-2'-deoxyguanosine in DNA + H2O = a 2'-deoxyguanosine in DNA + lactate + H(+). It catalyses the reaction an N(2)-(1-hydroxy-2-oxoethyl)-guanosine in RNA + H2O = a guanosine in RNA + glycolate + H(+). The catalysed reaction is an N(2)-(1-hydroxy-2-oxoethyl)-2'-deoxyguanosine in DNA + H2O = a 2'-deoxyguanosine in DNA + glycolate + H(+). Functionally, protein and nucleotide deglycase that catalyzes the deglycation of the Maillard adducts formed between amino groups of proteins or nucleotides and reactive carbonyl groups of glyoxals. Thus, functions as a protein deglycase that repairs methylglyoxal- and glyoxal-glycated proteins, and releases repaired proteins and lactate or glycolate, respectively. Deglycates cysteine, arginine and lysine residues in proteins, and thus reactivates these proteins by reversing glycation by glyoxals. Acts on early glycation intermediates (hemithioacetals and aminocarbinols), preventing the formation of Schiff bases and advanced glycation endproducts (AGE). Also functions as a nucleotide deglycase able to repair glycated guanine in the free nucleotide pool (GTP, GDP, GMP, dGTP) and in DNA and RNA. Is thus involved in a major nucleotide repair system named guanine glycation repair (GG repair), dedicated to reversing methylglyoxal and glyoxal damage via nucleotide sanitization and direct nucleic acid repair. Plays an important role in protecting cells from carbonyl stress. The chain is Protein/nucleic acid deglycase HchA from Shigella flexneri.